The sequence spans 447 residues: 3-phosphoshikimate 1-carboxyvinyltransferase (447 aa).

3-phosphoshikimate is bound by residues Lys25, Ser26, and Arg30. A phosphoenolpyruvate-binding site is contributed by Lys25. Residues Gly96 and Arg124 each contribute to the phosphoenolpyruvate site. Positions 171, 172, 173, 203, 325, and 352 each coordinate 3-phosphoshikimate. Position 173 (Gln173) interacts with phosphoenolpyruvate. Residue Asp325 is the Proton acceptor of the active site. Phosphoenolpyruvate is bound by residues Arg356, Arg400, and Lys425.

Belongs to the EPSP synthase family. Monomer.

Its subcellular location is the cytoplasm. The catalysed reaction is 3-phosphoshikimate + phosphoenolpyruvate = 5-O-(1-carboxyvinyl)-3-phosphoshikimate + phosphate. It functions in the pathway metabolic intermediate biosynthesis; chorismate biosynthesis; chorismate from D-erythrose 4-phosphate and phosphoenolpyruvate: step 6/7. Functionally, catalyzes the transfer of the enolpyruvyl moiety of phosphoenolpyruvate (PEP) to the 5-hydroxyl of shikimate-3-phosphate (S3P) to produce enolpyruvyl shikimate-3-phosphate and inorganic phosphate. The protein is 3-phosphoshikimate 1-carboxyvinyltransferase of Bordetella petrii (strain ATCC BAA-461 / DSM 12804 / CCUG 43448).